Here is a 178-residue protein sequence, read N- to C-terminus: Inner membrane-spanning protein YciB (178 aa).

The next 5 membrane-spanning stretches (helical) occupy residues Ile22–Leu42, Met50–Asn70, Trp76–Met96, Ile121–Leu141, and Phe149–Ile169.

The protein belongs to the YciB family.

The protein resides in the cell inner membrane. Its function is as follows. Plays a role in cell envelope biogenesis, maintenance of cell envelope integrity and membrane homeostasis. The sequence is that of Inner membrane-spanning protein YciB from Erwinia tasmaniensis (strain DSM 17950 / CFBP 7177 / CIP 109463 / NCPPB 4357 / Et1/99).